A 243-amino-acid chain; its full sequence is Ribosomal RNA small subunit methyltransferase J (243 aa).

S-adenosyl-L-methionine is bound by residues E112–R113 and D164.

It belongs to the methyltransferase superfamily. RsmJ family.

It is found in the cytoplasm. It carries out the reaction guanosine(1516) in 16S rRNA + S-adenosyl-L-methionine = N(2)-methylguanosine(1516) in 16S rRNA + S-adenosyl-L-homocysteine + H(+). Specifically methylates the guanosine in position 1516 of 16S rRNA. This is Ribosomal RNA small subunit methyltransferase J from Legionella pneumophila (strain Paris).